The chain runs to 224 residues: PKHD-type hydroxylase tll1907 (224 aa).

The Fe2OG dioxygenase domain maps to 77–176 (KIIGPLLFSR…RLVAVAWVQS (100 aa)). 3 residues coordinate Fe cation: histidine 96, aspartate 98, and histidine 157. Arginine 167 provides a ligand contact to 2-oxoglutarate.

The cofactor is Fe(2+). L-ascorbate is required as a cofactor.

This chain is PKHD-type hydroxylase tll1907, found in Thermosynechococcus vestitus (strain NIES-2133 / IAM M-273 / BP-1).